Reading from the N-terminus, the 381-residue chain is NF-kappa-B inhibitor-like protein 1 (381 aa).

The tract at residues 1-34 is disordered; sequence MSNPSPQVPEEEASTSVCRPKSSMASTSRRQRRE. 2 ANK repeats span residues 64-93 and 97-130; these read GQPPPLHRACARHDAPALCLLLRLGADPAH and HGDTALHAAARQGPDAYTDFFLPLLSRCPSAMGI. 2 disordered regions span residues 129–167 and 186–294; these read GIKNKDGETPGQILGWGPPWDSAEEEEEDDASKEREWRQ and GDAS…RGSL. The residue at position 150 (Ser-150) is a Phosphoserine. A compositionally biased stretch (acidic residues) spans 150-159; the sequence is SAEEEEEDDA. 2 stretches are compositionally biased toward basic and acidic residues: residues 218–228 and 238–287; these read REAEGSRRPPR and QQEE…EHPR.

As to quaternary structure, interacts with CACTIN (via N-terminal domain); the interaction occurs in a proinflammatory-independent manner. Detected in different cell types including monocytes, T-cells, B-cells and hepatocytes.

The protein localises to the nucleus. In terms of biological role, involved in the regulation of innate immune response. Acts as negative regulator of Toll-like receptor and interferon-regulatory factor (IRF) signaling pathways. Contributes to the negative regulation of transcriptional activation of NF-kappa-B target genes in response to endogenous proinflammatory stimuli. This is NF-kappa-B inhibitor-like protein 1 (NFKBIL1) from Homo sapiens (Human).